The chain runs to 325 residues: GMP reductase (325 aa).

Catalysis depends on cysteine 174, which acts as the Thioimidate intermediate. Residue 203–226 (IIADGGIRTHGDIAKSIRFGATMV) participates in NADP(+) binding.

This sequence belongs to the IMPDH/GMPR family. GuaC type 2 subfamily.

The catalysed reaction is IMP + NH4(+) + NADP(+) = GMP + NADPH + 2 H(+). Functionally, catalyzes the irreversible NADPH-dependent deamination of GMP to IMP. It functions in the conversion of nucleobase, nucleoside and nucleotide derivatives of G to A nucleotides, and in maintaining the intracellular balance of A and G nucleotides. The sequence is that of GMP reductase from Helicobacter pylori (strain J99 / ATCC 700824) (Campylobacter pylori J99).